Consider the following 87-residue polypeptide: Prolactin-releasing peptide (87 aa).

The N-terminal stretch at Met-1–Ala-22 is a signal peptide. The residue at position 53 (Phe-53) is a Phenylalanine amide. Positions Ala-58–Gly-87 are excised as a propeptide.

Medulla oblongata and hypothalamus.

Its subcellular location is the secreted. Functionally, stimulates prolactin (PRL) release and regulates the expression of prolactin through its receptor GPR10. May stimulate lactotrophs directly to secrete PRL. The sequence is that of Prolactin-releasing peptide (PRLH) from Homo sapiens (Human).